Reading from the N-terminus, the 244-residue chain is Dirigent protein 18 (244 aa).

Residues 1–25 (MMKQSPFSLLTSIFLIAALFTATTA) form the signal peptide.

It belongs to the plant dirigent protein family. As to quaternary structure, homodimer.

The protein resides in the secreted. Its subcellular location is the extracellular space. It localises to the apoplast. Functionally, dirigent proteins impart stereoselectivity on the phenoxy radical-coupling reaction, yielding optically active lignans from two molecules of coniferyl alcohol in the biosynthesis of lignans, flavonolignans, and alkaloids and thus plays a central role in plant secondary metabolism. This chain is Dirigent protein 18 (DIR18), found in Arabidopsis thaliana (Mouse-ear cress).